A 111-amino-acid polypeptide reads, in one-letter code: Inner membrane protein YdgC (111 aa).

The Cytoplasmic portion of the chain corresponds to 1 to 26 (MGLVIKAALGALVVLLIGVLAKTKNY). Residues 27–47 (YIAGLIPLFPTFALIAHYIVA) traverse the membrane as a helical segment. Topologically, residues 48-58 (SERGIEALRAT) are periplasmic. Residues 59-79 (IIFSMWSIIPYFVYLVSLWYF) traverse the membrane as a helical segment. Topologically, residues 80-87 (TGMMRLPA) are cytoplasmic. Residues 88–108 (AFVGSVACWGISAWVLIICWI) traverse the membrane as a helical segment. At 109-111 (KLH) the chain is on the periplasmic side.

This sequence to P.aeruginosa GlpM.

The protein resides in the cell inner membrane. This Escherichia coli O157:H7 protein is Inner membrane protein YdgC (ydgC).